The primary structure comprises 185 residues: dTTP/UTP pyrophosphatase (185 aa).

Residue aspartate 64 is the Proton acceptor of the active site.

Belongs to the Maf family. YhdE subfamily. A divalent metal cation is required as a cofactor.

The protein resides in the cytoplasm. It carries out the reaction dTTP + H2O = dTMP + diphosphate + H(+). It catalyses the reaction UTP + H2O = UMP + diphosphate + H(+). Functionally, nucleoside triphosphate pyrophosphatase that hydrolyzes dTTP and UTP. May have a dual role in cell division arrest and in preventing the incorporation of modified nucleotides into cellular nucleic acids. This chain is dTTP/UTP pyrophosphatase, found in Thermococcus gammatolerans (strain DSM 15229 / JCM 11827 / EJ3).